A 96-amino-acid polypeptide reads, in one-letter code: Protein ORF5 (96 aa).

The protein belongs to the microviridae C protein family.

In terms of biological role, plays a central role in the packaging of viral DNA into phage procapsid, which occurs in the late stage of infection. Can interact with the replicative complex after the completion of one round of DNA synthesis. When protein ORF5 is bound to the replicative form, the complex becomes accessible to procapsid and serves as a DNA packaging apparatus. The protein is Protein ORF5 of Chlamydia phage 1 (Bacteriophage Chp1).